A 391-amino-acid polypeptide reads, in one-letter code: Probable tRNA sulfurtransferase (391 aa).

One can recognise a THUMP domain in the interval 60–167 (DETVAALQRV…NKAYVYSNTL (108 aa)). ATP is bound by residues 184–185 (LL), 209–210 (YF), arginine 266, glycine 288, and glutamine 297.

This sequence belongs to the ThiI family.

It is found in the cytoplasm. The catalysed reaction is [ThiI sulfur-carrier protein]-S-sulfanyl-L-cysteine + a uridine in tRNA + 2 reduced [2Fe-2S]-[ferredoxin] + ATP + H(+) = [ThiI sulfur-carrier protein]-L-cysteine + a 4-thiouridine in tRNA + 2 oxidized [2Fe-2S]-[ferredoxin] + AMP + diphosphate. The enzyme catalyses [ThiS sulfur-carrier protein]-C-terminal Gly-Gly-AMP + S-sulfanyl-L-cysteinyl-[cysteine desulfurase] + AH2 = [ThiS sulfur-carrier protein]-C-terminal-Gly-aminoethanethioate + L-cysteinyl-[cysteine desulfurase] + A + AMP + 2 H(+). It participates in cofactor biosynthesis; thiamine diphosphate biosynthesis. Functionally, catalyzes the ATP-dependent transfer of a sulfur to tRNA to produce 4-thiouridine in position 8 of tRNAs, which functions as a near-UV photosensor. Also catalyzes the transfer of sulfur to the sulfur carrier protein ThiS, forming ThiS-thiocarboxylate. This is a step in the synthesis of thiazole, in the thiamine biosynthesis pathway. The sulfur is donated as persulfide by IscS. The chain is Probable tRNA sulfurtransferase from Lachnoclostridium phytofermentans (strain ATCC 700394 / DSM 18823 / ISDg) (Clostridium phytofermentans).